Reading from the N-terminus, the 946-residue chain is Protein TMA108 (946 aa).

S2 bears the N-acetylserine mark. 293–297 (MAMEN) is a binding site for substrate. H330 is a binding site for Zn(2+). Catalysis depends on E331, which acts as the Proton acceptor. Zn(2+) is bound by residues H334 and E353.

Belongs to the peptidase M1 family. In terms of assembly, associates with ribosomal complexes. Requires Zn(2+) as cofactor.

It is found in the cytoplasm. Its function is as follows. Putative zinc aminopeptidase which may be involved in ribosome biogenesis. The polypeptide is Protein TMA108 (TMA108) (Saccharomyces cerevisiae (strain ATCC 204508 / S288c) (Baker's yeast)).